A 207-amino-acid chain; its full sequence is Glutathione S-transferase 4 (207 aa).

A GST N-terminal domain is found at 2–79 (PNYKLLYFDA…YLARKFGLAG (78 aa)). Glutathione contacts are provided by residues Y8, W39, K43, 49-51 (GQL), and 63-64 (QS). The 127-residue stretch at 81–207 (TAEEEAYADS…YVATRKDSIV (127 aa)) folds into the GST C-terminal domain.

Belongs to the GST superfamily. Sigma family.

The catalysed reaction is RX + glutathione = an S-substituted glutathione + a halide anion + H(+). In terms of biological role, conjugation of reduced glutathione to a wide number of exogenous and endogenous hydrophobic electrophiles. May play a role in the detoxification of reactive oxygen species produced during pathogenic bacterial infection. This Caenorhabditis elegans protein is Glutathione S-transferase 4.